The primary structure comprises 55 residues: MAKPTTIKIRLNSSAGTGHFYVTKKNARTMTEKMVVRKYDPVARKHVEYKEGKIK.

It belongs to the bacterial ribosomal protein bL33 family.

The chain is Large ribosomal subunit protein bL33 from Jannaschia sp. (strain CCS1).